A 147-amino-acid chain; its full sequence is UPF0178 protein AFE_3267 (147 aa).

This sequence belongs to the UPF0178 family.

This is UPF0178 protein AFE_3267 from Acidithiobacillus ferrooxidans (strain ATCC 23270 / DSM 14882 / CIP 104768 / NCIMB 8455) (Ferrobacillus ferrooxidans (strain ATCC 23270)).